The chain runs to 571 residues: Carboxylesterase 3B (571 aa).

A signal peptide spans 1 to 31; the sequence is MTNMRTMIPAGSSVLVWVTCLLLAFVTTVTG. Residues cysteine 100 and cysteine 127 are joined by a disulfide bond. Serine 232 serves as the catalytic Acyl-ester intermediate. A disulfide bridge links cysteine 284 with cysteine 295. N-linked (GlcNAc...) asparagine glycosylation occurs at asparagine 311. Catalysis depends on charge relay system residues glutamate 347 and histidine 460. Positions 568–571 match the Prevents secretion from ER motif; that stretch reads PEEL.

It belongs to the type-B carboxylesterase/lipase family.

It is found in the endoplasmic reticulum lumen. The enzyme catalyses a carboxylic ester + H2O = an alcohol + a carboxylate + H(+). Involved in the detoxification of xenobiotics and in the activation of ester and amide prodrugs. In Mus musculus (Mouse), this protein is Carboxylesterase 3B (Ces3b).